The sequence spans 354 residues: MGEQPIFTTRAHVFQIDPNTKKNWMPASKQAVTVSYFYDVTRNSYRIISVDGAKVIINSTITPNMTFTKTSQKFGQWADSRANTVFGLGFSSEQQLTKFAEKFQEVKEAAKIAKDKTQEKIETSSNHSQESGRETPSSTQASSVNGTDDEKASHAGPANTHLKSENDKLKIALTQSAANVKKWEIELQTLRESNARLTTALQESAASVEQWKRQFSICRDENDRLRNKIDELEEQCSEINREKEKNTQLKRRIEELEAELREKETELKDLRKQSEIIPQLMSECEYVSEKLEAAERDNQNLEDKVRSLKTDIEESKYRQRHLKVELKSFLEVLDGKIDDLHDFRRGLSKLGTDN.

Residues 1–110 (MGEQPIFTTR…EKFQEVKEAA (110 aa)) form the WH1 domain. The stretch at 92 to 122 (SEQQLTKFAEKFQEVKEAAKIAKDKTQEKIE) forms a coiled coil. Residues 112-122 (IAKDKTQEKIE) show a composition bias toward basic and acidic residues. The tract at residues 112 to 166 (IAKDKTQEKIETSSNHSQESGRETPSSTQASSVNGTDDEKASHAGPANTHLKSEN) is disordered. Positions 123 to 146 (TSSNHSQESGRETPSSTQASSVNG) are enriched in polar residues. The stretch at 160–329 (THLKSENDKL…RHLKVELKSF (170 aa)) forms a coiled coil.

It belongs to the Homer family. In terms of assembly, forms coiled-coil structures that mediate homo- and heteromultimerization. Interacts with NFATC2; interaction is reduced by AKT activation. Interacts with NFATC1 and NFATC4. Interacts with DAGLA (via PPXXF motif); this interaction is required for the cell membrane localization of DAGLA.

The protein resides in the cytoplasm. Its subcellular location is the cell membrane. The protein localises to the postsynaptic density. It localises to the synapse. It is found in the cell projection. The protein resides in the stereocilium. In terms of biological role, postsynaptic density scaffolding protein. Binds and cross-links cytoplasmic regions of GRM1, GRM5, ITPR1, DNM3, RYR1, RYR2, SHANK1 and SHANK3. By physically linking GRM1 and GRM5 with ER-associated ITPR1 receptors, it aids the coupling of surface receptors to intracellular calcium release. May also couple GRM1 to PI3 kinase through its interaction with AGAP2. Isoforms can be differently regulated and may play an important role in maintaining the plasticity at glutamatergic synapses. Required for normal hearing. Negatively regulates T cell activation by inhibiting the calcineurin-NFAT pathway. Acts by competing with calcineurin/PPP3CA for NFAT protein binding, hence preventing NFAT activation by PPP3CA. This is Homer protein homolog 2 from Homo sapiens (Human).